The chain runs to 1070 residues: uncharacterized protein (1070 aa).

5 disordered regions span residues 66–88 (EKEK…PGLE), 355–388 (DLDF…DFSN), 423–483 (EDDL…EQID), 667–692 (EELK…EETE), and 735–786 (SKTQ…NNNN). A compositionally biased stretch (low complexity) spans 73–83 (NENTSNVNKIK). Composition is skewed to basic and acidic residues over residues 435–460 (KKEE…EEYR) and 474–483 (MKMHEKEQID). The stretch at 475-736 (KMHEKEQIDD…EMRLQLIRSK (262 aa)) forms a coiled coil. A compositionally biased stretch (polar residues) spans 735–745 (SKTQGTSSTFI). Residues 751-765 (KHLESLKEEKKKEVK) are compositionally biased toward basic and acidic residues. Low complexity predominate over residues 773–786 (NNNNNNNNNNNNNN).

This is an uncharacterized protein from Plasmodium falciparum (isolate 3D7).